Consider the following 264-residue polypeptide: Thymidylate synthase (264 aa).

Residue arginine 21 coordinates dUMP. Histidine 51 serves as a coordination point for (6R)-5,10-methylene-5,6,7,8-tetrahydrofolate. 126-127 (RR) provides a ligand contact to dUMP. Cysteine 146 functions as the Nucleophile in the catalytic mechanism. DUMP-binding positions include 166-169 (RSCD), asparagine 177, and 207-209 (HLY). Residue aspartate 169 participates in (6R)-5,10-methylene-5,6,7,8-tetrahydrofolate binding. Residue alanine 263 participates in (6R)-5,10-methylene-5,6,7,8-tetrahydrofolate binding.

It belongs to the thymidylate synthase family. Bacterial-type ThyA subfamily. Homodimer.

The protein resides in the cytoplasm. The enzyme catalyses dUMP + (6R)-5,10-methylene-5,6,7,8-tetrahydrofolate = 7,8-dihydrofolate + dTMP. Its pathway is pyrimidine metabolism; dTTP biosynthesis. Functionally, catalyzes the reductive methylation of 2'-deoxyuridine-5'-monophosphate (dUMP) to 2'-deoxythymidine-5'-monophosphate (dTMP) while utilizing 5,10-methylenetetrahydrofolate (mTHF) as the methyl donor and reductant in the reaction, yielding dihydrofolate (DHF) as a by-product. This enzymatic reaction provides an intracellular de novo source of dTMP, an essential precursor for DNA biosynthesis. The protein is Thymidylate synthase of Shewanella sp. (strain ANA-3).